Reading from the N-terminus, the 356-residue chain is AT-hook motif nuclear-localized protein 1 (356 aa).

A disordered region spans residues 1-127; it reads MVLNMESTGE…PSHLPPPSSH (127 aa). Residues 49-66 are compositionally biased toward pro residues; the sequence is VTPPPPQPSSHHTAPPPL. Residues 88–97 are compositionally biased toward basic residues; sequence MKKKRGRPRK. The Bipartite nuclear localization signal signature appears at 89–97; it reads KKKRGRPRK. The a.T hook DNA-binding region spans 89-101; it reads KKKRGRPRKYGPD. Residues 106-118 are compositionally biased toward low complexity; sequence ALSPKPISSAPAP. A PPC domain is found at 167 to 309; that stretch reads GGNFTPHIIT…KHDFMLSSPT (143 aa). A required for nuclear localization region spans residues 270–287; the sequence is GLLVAASPVQVVVGSFLA. The short motif at 295–302 is the Nuclear localization signal element; that stretch reads KPKKNKHD.

Its subcellular location is the nucleus. It localises to the nucleoplasm. The protein localises to the chromosome. Its function is as follows. Transcription factor that specifically binds AT-rich DNA sequences related to the nuclear matrix attachment regions (MARs). May play a function in the positioning of chromatin fibers within the nucleus. In Arabidopsis thaliana (Mouse-ear cress), this protein is AT-hook motif nuclear-localized protein 1.